Here is a 156-residue protein sequence, read N- to C-terminus: MPKGTSSKVLANNKRASFDYAIEDTIEAGLVLTGTEIKSVRKGKISIGDAFVRFDGGEAILWNSNIAHFEQGNRYNHEQLRPRKLLLHKKQIATLMGSVSRDGYTIVPLKIYIKNGYAKCLIGLGRGKKKFDKRDDLKKKDAKRDIDRALRDKQKY.

Positions 130–156 (KFDKRDDLKKKDAKRDIDRALRDKQKY) are disordered. A compositionally biased stretch (basic and acidic residues) spans 132 to 156 (DKRDDLKKKDAKRDIDRALRDKQKY).

Belongs to the SmpB family.

It localises to the cytoplasm. In terms of biological role, required for rescue of stalled ribosomes mediated by trans-translation. Binds to transfer-messenger RNA (tmRNA), required for stable association of tmRNA with ribosomes. tmRNA and SmpB together mimic tRNA shape, replacing the anticodon stem-loop with SmpB. tmRNA is encoded by the ssrA gene; the 2 termini fold to resemble tRNA(Ala) and it encodes a 'tag peptide', a short internal open reading frame. During trans-translation Ala-aminoacylated tmRNA acts like a tRNA, entering the A-site of stalled ribosomes, displacing the stalled mRNA. The ribosome then switches to translate the ORF on the tmRNA; the nascent peptide is terminated with the 'tag peptide' encoded by the tmRNA and targeted for degradation. The ribosome is freed to recommence translation, which seems to be the essential function of trans-translation. The chain is SsrA-binding protein from Exiguobacterium sibiricum (strain DSM 17290 / CCUG 55495 / CIP 109462 / JCM 13490 / 255-15).